A 377-amino-acid polypeptide reads, in one-letter code: D-alanine--D-alanine ligase (377 aa).

The ATP-grasp domain occupies 140–349 (KELLTVNNIR…NVELVDKLID (210 aa)). An ATP-binding site is contributed by 170–225 (VKDLGDVVFVKAANQGSSVGVSRAKTADEFEAALTDSFQYDYKVLIEAAVKGPREL). 3 residues coordinate Mg(2+): D303, E316, and N318.

Belongs to the D-alanine--D-alanine ligase family. The cofactor is Mg(2+). Mn(2+) is required as a cofactor.

It is found in the cytoplasm. The enzyme catalyses 2 D-alanine + ATP = D-alanyl-D-alanine + ADP + phosphate + H(+). It functions in the pathway cell wall biogenesis; peptidoglycan biosynthesis. Cell wall formation. The polypeptide is D-alanine--D-alanine ligase (Leuconostoc citreum (strain KM20)).